The chain runs to 612 residues: Glutamine--fructose-6-phosphate aminotransferase [isomerizing] (612 aa).

Cysteine 2 functions as the Nucleophile; for GATase activity in the catalytic mechanism. Residues cysteine 2–aspartate 219 form the Glutamine amidotransferase type-2 domain. SIS domains follow at residues alanine 287–serine 427 and isoleucine 460–proline 602. Catalysis depends on lysine 607, which acts as the For Fru-6P isomerization activity.

As to quaternary structure, homodimer.

It is found in the cytoplasm. The catalysed reaction is D-fructose 6-phosphate + L-glutamine = D-glucosamine 6-phosphate + L-glutamate. Catalyzes the first step in hexosamine metabolism, converting fructose-6P into glucosamine-6P using glutamine as a nitrogen source. The chain is Glutamine--fructose-6-phosphate aminotransferase [isomerizing] from Francisella tularensis subsp. tularensis (strain SCHU S4 / Schu 4).